Consider the following 414-residue polypeptide: Zinc metalloproteinase-disintegrin-like batroxstatin-3 (414 aa).

N-linked (GlcNAc...) asparagine glycans are attached at residues N7 and N70. Residues 10 to 204 (KYIKLVIVAD…HTPQCILNEP (195 aa)) enclose the Peptidase M12B domain. 3 cysteine pairs are disulfide-bonded: C121–C199, C161–C183, and C163–C168. Zn(2+) is bound at residue H146. E147 is an active-site residue. 2 residues coordinate Zn(2+): H150 and H156. One can recognise a Disintegrin domain in the interval 212-298 (PEVCGNYLLE…HCPTDRFHRN (87 aa)). V214, N217, E221, E224, and D227 together coordinate Ca(2+). 14 disulfides stabilise this stretch: C215–C244, C226–C239, C228–C234, C238–C261, C252–C258, C257–C283, C270–C290, C277–C309, C302–C314, C321–C371, C336–C381, C349–C359, C366–C403, and C397–C408. Positions 276 to 278 (ECD) match the D/ECD-tripeptide motif. Residues D278, E281, D293, and R294 each coordinate Ca(2+).

Belongs to the venom metalloproteinase (M12B) family. P-III subfamily. P-IIIa sub-subfamily. Monomer. Requires Zn(2+) as cofactor. As to expression, expressed by the venom gland.

Its subcellular location is the secreted. Its function is as follows. Snake venom zinc metalloprotease that induces apoptosis in vascular endothelial cells (VEC), without degrading the extracellular matrix (it cannot cleave collagen) or inhibiting adhesion of VEC. Has also fibrinogenolytic and hemorrhagic activities. The chain is Zinc metalloproteinase-disintegrin-like batroxstatin-3 from Bothrops atrox (Barba amarilla).